A 416-amino-acid polypeptide reads, in one-letter code: Multifunctional CCA protein (416 aa).

The ATP site is built by Gly-8 and Arg-11. Positions 8 and 11 each coordinate CTP. Mg(2+) is bound by residues Asp-21 and Asp-23. ATP is bound by residues Arg-91, Arg-137, and Arg-140. 3 residues coordinate CTP: Arg-91, Arg-137, and Arg-140. In terms of domain architecture, HD spans Ser-228–Trp-335.

The protein belongs to the tRNA nucleotidyltransferase/poly(A) polymerase family. Bacterial CCA-adding enzyme type 1 subfamily. As to quaternary structure, monomer. Can also form homodimers and oligomers. Requires Mg(2+) as cofactor. It depends on Ni(2+) as a cofactor.

It catalyses the reaction a tRNA precursor + 2 CTP + ATP = a tRNA with a 3' CCA end + 3 diphosphate. The catalysed reaction is a tRNA with a 3' CCA end + 2 CTP + ATP = a tRNA with a 3' CCACCA end + 3 diphosphate. In terms of biological role, catalyzes the addition and repair of the essential 3'-terminal CCA sequence in tRNAs without using a nucleic acid template. Adds these three nucleotides in the order of C, C, and A to the tRNA nucleotide-73, using CTP and ATP as substrates and producing inorganic pyrophosphate. tRNA 3'-terminal CCA addition is required both for tRNA processing and repair. Also involved in tRNA surveillance by mediating tandem CCA addition to generate a CCACCA at the 3' terminus of unstable tRNAs. While stable tRNAs receive only 3'-terminal CCA, unstable tRNAs are marked with CCACCA and rapidly degraded. The polypeptide is Multifunctional CCA protein (Haemophilus influenzae (strain PittGG)).